We begin with the raw amino-acid sequence, 89 residues long: Small ribosomal subunit protein uS15 (89 aa).

Belongs to the universal ribosomal protein uS15 family. In terms of assembly, part of the 30S ribosomal subunit. Forms a bridge to the 50S subunit in the 70S ribosome, contacting the 23S rRNA.

One of the primary rRNA binding proteins, it binds directly to 16S rRNA where it helps nucleate assembly of the platform of the 30S subunit by binding and bridging several RNA helices of the 16S rRNA. Functionally, forms an intersubunit bridge (bridge B4) with the 23S rRNA of the 50S subunit in the ribosome. The sequence is that of Small ribosomal subunit protein uS15 from Lactobacillus gasseri (strain ATCC 33323 / DSM 20243 / BCRC 14619 / CIP 102991 / JCM 1131 / KCTC 3163 / NCIMB 11718 / NCTC 13722 / AM63).